The primary structure comprises 361 residues: Phosphoserine aminotransferase (361 aa).

Arg43 contributes to the L-glutamate binding site. Pyridoxal 5'-phosphate-binding positions include 77-78 (AS), Trp103, Thr153, Asp172, and Gln195. Residue Lys196 is modified to N6-(pyridoxal phosphate)lysine. 237 to 238 (NT) provides a ligand contact to pyridoxal 5'-phosphate.

The protein belongs to the class-V pyridoxal-phosphate-dependent aminotransferase family. SerC subfamily. As to quaternary structure, homodimer. Pyridoxal 5'-phosphate serves as cofactor.

It localises to the cytoplasm. It catalyses the reaction O-phospho-L-serine + 2-oxoglutarate = 3-phosphooxypyruvate + L-glutamate. The enzyme catalyses 4-(phosphooxy)-L-threonine + 2-oxoglutarate = (R)-3-hydroxy-2-oxo-4-phosphooxybutanoate + L-glutamate. It participates in amino-acid biosynthesis; L-serine biosynthesis; L-serine from 3-phospho-D-glycerate: step 2/3. Its pathway is cofactor biosynthesis; pyridoxine 5'-phosphate biosynthesis; pyridoxine 5'-phosphate from D-erythrose 4-phosphate: step 3/5. Functionally, catalyzes the reversible conversion of 3-phosphohydroxypyruvate to phosphoserine and of 3-hydroxy-2-oxo-4-phosphonooxybutanoate to phosphohydroxythreonine. This Desulfotalea psychrophila (strain LSv54 / DSM 12343) protein is Phosphoserine aminotransferase.